Here is a 232-residue protein sequence, read N- to C-terminus: Ribonuclease 3 (232 aa).

Residues 2–135 (IKALEDDLSQ…FIGALYLDQG (134 aa)) enclose the RNase III domain. Glutamate 48 serves as a coordination point for Mg(2+). The active site involves aspartate 52. The Mg(2+) site is built by aspartate 121 and glutamate 124. Glutamate 124 is an active-site residue. Residues 161–230 (DHKSELQELL…ANQALQLLRR (70 aa)) enclose the DRBM domain.

This sequence belongs to the ribonuclease III family. In terms of assembly, homodimer. Mg(2+) serves as cofactor.

Its subcellular location is the cytoplasm. It carries out the reaction Endonucleolytic cleavage to 5'-phosphomonoester.. In terms of biological role, digests double-stranded RNA. Involved in the processing of primary rRNA transcript to yield the immediate precursors to the large and small rRNAs (23S and 16S). Processes some mRNAs, and tRNAs when they are encoded in the rRNA operon. Processes pre-crRNA and tracrRNA of type II CRISPR loci if present in the organism. The protein is Ribonuclease 3 of Pediococcus pentosaceus (strain ATCC 25745 / CCUG 21536 / LMG 10740 / 183-1w).